A 68-amino-acid polypeptide reads, in one-letter code: Large ribosomal subunit protein bL31 (68 aa).

Residues cysteine 17, cysteine 19, cysteine 37, and cysteine 40 each contribute to the Zn(2+) site.

This sequence belongs to the bacterial ribosomal protein bL31 family. Type A subfamily. In terms of assembly, part of the 50S ribosomal subunit. The cofactor is Zn(2+).

In terms of biological role, binds the 23S rRNA. This Dehalococcoides mccartyi (strain ATCC BAA-2266 / KCTC 15142 / 195) (Dehalococcoides ethenogenes (strain 195)) protein is Large ribosomal subunit protein bL31.